The primary structure comprises 893 residues: cGMP-specific 3',5'-cyclic phosphodiesterase (893 aa).

2 GAF domains span residues 21-173 and 205-390; these read DIDV…GIGI and NLEC…GLGI. In terms of domain architecture, PDEase spans 420–743; that stretch reads GQDQTEKLIQ…RNWQDLAEKV (324 aa). Residue His496 is the Proton donor of the active site. His500, His536, Asp537, and Asp647 together coordinate a divalent metal cation. 2 disordered regions span residues 784–807 and 844–893; these read QQSQ…RLSI and HVSE…CALL. 2 stretches are compositionally biased toward basic and acidic residues: residues 789 to 800 and 844 to 853; these read GGDDSHTPEHQR and HVSEDMDDKS. Over residues 864-880 the composition is skewed to low complexity; that stretch reads SVGRMSASSSTSSAGTV. Residues 883–893 show a composition bias toward basic residues; it reads SKKRSKLCALL. Cys890 bears the Cysteine methyl ester mark. Residue Cys890 is the site of S-farnesyl cysteine attachment. Positions 891-893 are cleaved as a propeptide — removed in mature form; sequence ALL.

This sequence belongs to the cyclic nucleotide phosphodiesterase family. Interacts with PrBP. Requires a divalent metal cation as cofactor.

It localises to the cell membrane. The enzyme catalyses 3',5'-cyclic GMP + H2O = GMP + H(+). Functionally, has a role regulating cGMP transport in Malpighian tubule principal cells. This chain is cGMP-specific 3',5'-cyclic phosphodiesterase, found in Drosophila virilis (Fruit fly).